The following is a 64-amino-acid chain: Potassium channel toxin kappa-KTx 4.1 (64 aa).

An N-terminal signal peptide occupies residues 1 to 26 (MKSTLMTASLLILVVLFIIDYASVYA). The propeptide occupies 27–38 (EFIDGEISLERE). Cystine bridges form between Cys43/Cys61 and Cys47/Cys57.

The protein belongs to the short scorpion toxin superfamily. Potassium channel inhibitor kappa-KTx family. Kappa-KTx 4 subfamily. Expressed by the venom gland.

The protein resides in the secreted. Its function is as follows. Potassium channel inhibitor (Kv). The sequence is that of Potassium channel toxin kappa-KTx 4.1 from Heterometrus petersii (Asian forest scorpion).